A 145-amino-acid chain; its full sequence is Plastocyanin, chloroplastic (145 aa).

The transit peptide at 1 to 48 (MASLMRKAAVAPAKATRTTVKASASLQRVAQAAGVAVAGFSLALSANA) directs the protein to the chloroplast. The Plastocyanin-like domain maps to 49–145 (ANVKLGADSG…AGMVGKVIVQ (97 aa)). Cu cation is bound by residues histidine 85, cysteine 130, histidine 133, and methionine 138.

The protein belongs to the plastocyanin family. The cofactor is Cu(2+).

Its subcellular location is the plastid. It is found in the chloroplast thylakoid membrane. Its function is as follows. Participates in electron transfer between P700 and the cytochrome b6-f complex in photosystem I. This Tetradesmus obliquus (Green alga) protein is Plastocyanin, chloroplastic (PETE).